A 427-amino-acid chain; its full sequence is Serine--tRNA ligase (427 aa).

232–234 (TAE) contacts L-serine. 263-265 (RSE) is an ATP binding site. E286 contributes to the L-serine binding site. 350–353 (EISS) is an ATP binding site. S385 is an L-serine binding site.

This sequence belongs to the class-II aminoacyl-tRNA synthetase family. Type-1 seryl-tRNA synthetase subfamily. Homodimer. The tRNA molecule binds across the dimer.

It is found in the cytoplasm. The enzyme catalyses tRNA(Ser) + L-serine + ATP = L-seryl-tRNA(Ser) + AMP + diphosphate + H(+). It catalyses the reaction tRNA(Sec) + L-serine + ATP = L-seryl-tRNA(Sec) + AMP + diphosphate + H(+). It functions in the pathway aminoacyl-tRNA biosynthesis; selenocysteinyl-tRNA(Sec) biosynthesis; L-seryl-tRNA(Sec) from L-serine and tRNA(Sec): step 1/1. In terms of biological role, catalyzes the attachment of serine to tRNA(Ser). Is also able to aminoacylate tRNA(Sec) with serine, to form the misacylated tRNA L-seryl-tRNA(Sec), which will be further converted into selenocysteinyl-tRNA(Sec). This Lacticaseibacillus paracasei (strain ATCC 334 / BCRC 17002 / CCUG 31169 / CIP 107868 / KCTC 3260 / NRRL B-441) (Lactobacillus paracasei) protein is Serine--tRNA ligase.